Reading from the N-terminus, the 562-residue chain is MTTTTTVKSDIEIAQEASMKKIQEIAAELNILEDELEPYGHYKGKLSLDIFKRLQNEKDGKVVLVTAINPTPAGEGKSTVTVGLGQAFNKIGKKTVIALREPSLGPTMGLKGGAAGGGFSQVVPMEDINLHFTGDIHAITTANNALAAFIDNHIQQGNTLGIDTRKIVWKRCVDLNDRALRNVVIGLGGPVQGVPREDGFDITVASEIMAVFCLATDIQDLKARLSRIVVAYNFANQPVTVKDLGVEGALTLLLKDALKPNLVQTLENTPAIIHGGPFANIAHGCNSVIATTMAAKLGDYVITEAGFGADLGAEKFLDIKARAAGIKPEAVVIVATIRALKMHGGVAKDQLKEENVDALAKGMENLQKHVETIQSFGVPFVIAINKFITDTDAEVAYLQEWCNERGYAVSLTEVWEKGGQGGVDLAEKVLKEIEKGENNYAPLYELELPLEEKIRTIAQKVYGAKDIEFAPKARKQLAQYEGEGWSNLPICMAKTQYSLSDDATKLGRPSDFIVTIRELKPSIGAGFIVALTGTMLTMPGLPKQPAALQMDVNEDGKAVGLF.

71–78 (TPAGEGKS) lines the ATP pocket.

Belongs to the formate--tetrahydrofolate ligase family.

It carries out the reaction (6S)-5,6,7,8-tetrahydrofolate + formate + ATP = (6R)-10-formyltetrahydrofolate + ADP + phosphate. The protein operates within one-carbon metabolism; tetrahydrofolate interconversion. This chain is Formate--tetrahydrofolate ligase, found in Bacillus cereus (strain Q1).